A 219-amino-acid polypeptide reads, in one-letter code: 3-dehydroquinate dehydratase (219 aa).

Residues S10, 29–31, and R59 each bind 3-dehydroquinate; that span reads EVR. Residue H116 is the Proton donor/acceptor of the active site. Catalysis depends on K142, which acts as the Schiff-base intermediate with substrate. R180 and Q203 together coordinate 3-dehydroquinate.

It belongs to the type-I 3-dehydroquinase family. As to quaternary structure, homodimer.

The enzyme catalyses 3-dehydroquinate = 3-dehydroshikimate + H2O. It participates in metabolic intermediate biosynthesis; chorismate biosynthesis; chorismate from D-erythrose 4-phosphate and phosphoenolpyruvate: step 3/7. In terms of biological role, involved in the third step of the chorismate pathway, which leads to the biosynthesis of aromatic amino acids. Catalyzes the cis-dehydration of 3-dehydroquinate (DHQ) and introduces the first double bond of the aromatic ring to yield 3-dehydroshikimate. The polypeptide is 3-dehydroquinate dehydratase (Methanocella arvoryzae (strain DSM 22066 / NBRC 105507 / MRE50)).